A 158-amino-acid chain; its full sequence is Histone H2B.1 (158 aa).

2 positions are modified to N6-acetyllysine: K7 and K25. Disordered stretches follow at residues 26 to 45 (AAAG…PKKG) and 135 to 158 (VHNF…GQQT). Over residues 135–144 (VHNFESETSK) the composition is skewed to basic and acidic residues. The span at 147–158 (SQGRKRGRGQQT) shows a compositional bias: basic residues.

Belongs to the histone H2B family. In terms of assembly, the nucleosome is a histone octamer containing two molecules each of H2A, H2B, H3 and H4 assembled in one H3-H4 heterotetramer and two H2A-H2B heterodimers. The octamer wraps approximately 147 bp of DNA. Post-translationally, can be acetylated to form H2BK6ac and H2BK33ac. Expressed in the generative cell within the bicellular pollen. Not detected in other reproductive or vegetative tissues.

Its subcellular location is the nucleus. It is found in the chromosome. Its function is as follows. Core component of nucleosome. Nucleosomes wrap and compact DNA into chromatin, limiting DNA accessibility to the cellular machineries which require DNA as a template. Histones thereby play a central role in transcription regulation, DNA repair, DNA replication and chromosomal stability. DNA accessibility is regulated via a complex set of post-translational modifications of histones, also called histone code, and nucleosome remodeling. The polypeptide is Histone H2B.1 (Lilium longiflorum (Trumpet lily)).